A 242-amino-acid polypeptide reads, in one-letter code: Protein CDV3 homolog B (242 aa).

Residues 1 to 15 (MAEPEERSLDDFFAK) show a composition bias toward basic and acidic residues. Residues 1-242 (MAEPEERSLD…DNQYAVLGEQ (242 aa)) are disordered. Alanine 2 is subject to N-acetylalanine. Residues 30 to 57 (AAGSRGPARPSDGATSSSLSSYVSAAGK) show a composition bias toward low complexity. Over residues 59-75 (VKKEKSGKSENPDQLQE) the composition is skewed to basic and acidic residues. The span at 105 to 122 (KEDDENENKEEQGADWEE) shows a compositional bias: acidic residues. 2 stretches are compositionally biased toward polar residues: residues 129–143 (DKSSGPWNKTAQAQA) and 183–194 (SDTQFPSPQATA). Residues 195 to 213 (KHTESRREKEMEKTFEIVK) are compositionally biased toward basic and acidic residues.

This sequence belongs to the CDV3 family.

Its subcellular location is the cytoplasm. This chain is Protein CDV3 homolog B (cdv3-b), found in Xenopus laevis (African clawed frog).